The following is a 231-amino-acid chain: Cytidylate kinase (231 aa).

Residue 18–26 (GPSGTGKSS) participates in ATP binding.

This sequence belongs to the cytidylate kinase family. Type 1 subfamily.

Its subcellular location is the cytoplasm. It catalyses the reaction CMP + ATP = CDP + ADP. The catalysed reaction is dCMP + ATP = dCDP + ADP. The protein is Cytidylate kinase of Streptomyces avermitilis (strain ATCC 31267 / DSM 46492 / JCM 5070 / NBRC 14893 / NCIMB 12804 / NRRL 8165 / MA-4680).